The chain runs to 199 residues: Ribonuclease P protein subunit p25 (199 aa).

The span at 1–11 shows a compositional bias: basic and acidic residues; the sequence is MENFRKVRSEE. Disordered stretches follow at residues 1 to 31 and 146 to 199; these read MENF…FADL and PRQL…DRTA. Residue Ser172 is modified to Phosphoserine. A compositionally biased stretch (acidic residues) spans 190–199; sequence PEAENEDRTA.

Belongs to the histone-like Alba family. Component of nuclear RNase P and RNase MRP ribonucleoproteins. RNase P consists of a catalytic RNA moiety and 10 different protein chains; POP1, POP4, POP5, POP7, RPP14, RPP21, RPP25, RPP30, RPP38 and RPP40. Within the RNase P complex, POP1, POP7 and RPP25 form the 'finger' subcomplex, POP5, RPP14, RPP40 and homodimeric RPP30 form the 'palm' subcomplex, and RPP21, POP4 and RPP38 form the 'wrist' subcomplex. All subunits of the RNase P complex interact with the catalytic RNA. Several subunits of RNase P are also part of the RNase MRP complex. RNase MRP consists of a catalytic RNA moiety and about 8 protein subunits; POP1, POP7, RPP25, RPP30, RPP38, RPP40 and possibly also POP4 and POP5. POP7 forms a heterodimer with RPP25 that binds to the P3 stem loop of the catalytic RNA.

The protein resides in the nucleus. It is found in the nucleolus. Component of ribonuclease P, a ribonucleoprotein complex that generates mature tRNA molecules by cleaving their 5'-ends. Also a component of the MRP ribonuclease complex, which cleaves pre-rRNA sequences. The chain is Ribonuclease P protein subunit p25 (Rpp25) from Rattus norvegicus (Rat).